We begin with the raw amino-acid sequence, 236 residues long: Glucosamine-6-phosphate deaminase (236 aa).

The active-site Proton acceptor; for enolization step is the Asp-62. Asn-128 (for ring-opening step) is an active-site residue. Residue His-130 is the Proton acceptor; for ring-opening step of the active site. Glu-135 (for ring-opening step) is an active-site residue.

This sequence belongs to the glucosamine/galactosamine-6-phosphate isomerase family. NagB subfamily.

The catalysed reaction is alpha-D-glucosamine 6-phosphate + H2O = beta-D-fructose 6-phosphate + NH4(+). It participates in amino-sugar metabolism; N-acetylneuraminate degradation; D-fructose 6-phosphate from N-acetylneuraminate: step 5/5. Functionally, catalyzes the reversible isomerization-deamination of glucosamine 6-phosphate (GlcN6P) to form fructose 6-phosphate (Fru6P) and ammonium ion. This Lacticaseibacillus paracasei (strain ATCC 334 / BCRC 17002 / CCUG 31169 / CIP 107868 / KCTC 3260 / NRRL B-441) (Lactobacillus paracasei) protein is Glucosamine-6-phosphate deaminase.